The primary structure comprises 468 residues: Tripartite motif-containing protein 75 (468 aa).

Residues 16–57 (CSICLDYLSDPVTIECGHNFCRSCIQQSWLDLQELFPCPVCR) form an RING-type zinc finger. The B box-type zinc-finger motif lies at 92–133 (EETTLCEKHNQPLSVFCKEDLMVLCPLCTQPPDHQGHHVRPI). Zn(2+) contacts are provided by C97, H100, C119, and H125. Residues 170 to 222 (LELREMVENQRQELSSEFEHLNQFLDREQQAVLSRLAEEEKDNQQKLSANITA) are a coiled coil. The B30.2/SPRY domain maps to 276–468 (CSFPPQYSAL…LRICTGTVCE (193 aa)).

Belongs to the TRIM/RBCC family.

It localises to the cytoplasm. It is found in the cytoskeleton. The protein localises to the spindle. May play a role in female meiosis. This chain is Tripartite motif-containing protein 75, found in Homo sapiens (Human).